The chain runs to 137 residues: uncharacterized protein (137 aa).

The tract at residues 67–87 (KSERQHQRVHHELPHDKPRQS) is disordered. Basic and acidic residues predominate over residues 70–85 (RQHQRVHHELPHDKPR).

This is an uncharacterized protein from Human cytomegalovirus (strain AD169) (HHV-5).